Here is a 524-residue protein sequence, read N- to C-terminus: Ankyrin repeat-containing protein At5g02620 (524 aa).

ANK repeat units lie at residues 16–45 (RDDTPLHTAVREGKTDLLLEMIGEHDGVEL), 55–84 (SGETALYVAAEYGYTDMVKILMKHSDSVLA), 90–119 (NGFDAFHIAAKNGNLQVLDVLIEANPELSF), 124–153 (SKTTALHTAASQGHGEIVCFLLDKGVDLAA), 158–187 (NGKTALHSAARNGHTVIVKKLIEKKAGMVT), 192–222 (KGQTALHMAVKGQNTEIVDVLMEADGSLINS), 226–255 (KGNTPLHIAVRKNRAEIVQTVLKYCEVSRV), and 260–289 (SGETALDIAEKTGLHEIVPLLQKIGMQNAR). The next 4 helical transmembrane spans lie at 349-369 (AINSTTLVAILIATVAFAAIF), 399-419 (FLIFVVFDSFALFISLAVVVV), 441-461 (LMWMACIMISVAFVSLSFVVV), and 472-492 (VTAIGALIMVSTLGTMCYWVI). Serine 508 bears the Phosphoserine mark.

It is found in the membrane. The polypeptide is Ankyrin repeat-containing protein At5g02620 (Arabidopsis thaliana (Mouse-ear cress)).